The chain runs to 286 residues: D-tagatose-1,6-bisphosphate aldolase subunit KbaY (286 aa).

Asp82 acts as the Proton donor in catalysis. Residues His83 and His180 each coordinate Zn(2+). Residue Gly181 participates in dihydroxyacetone phosphate binding. His208 lines the Zn(2+) pocket. Residues 209–211 (GAS) and 230–233 (NVAT) each bind dihydroxyacetone phosphate.

It belongs to the class II fructose-bisphosphate aldolase family. TagBP aldolase KbaY subfamily. Homotetramer. Forms a complex with KbaZ. The cofactor is Zn(2+).

The enzyme catalyses D-tagatofuranose 1,6-bisphosphate = D-glyceraldehyde 3-phosphate + dihydroxyacetone phosphate. Its pathway is carbohydrate metabolism; D-tagatose 6-phosphate degradation; D-glyceraldehyde 3-phosphate and glycerone phosphate from D-tagatose 6-phosphate: step 2/2. Its function is as follows. Catalytic subunit of the tagatose-1,6-bisphosphate aldolase KbaYZ, which catalyzes the reversible aldol condensation of dihydroxyacetone phosphate (DHAP or glycerone-phosphate) with glyceraldehyde 3-phosphate (G3P) to produce tagatose 1,6-bisphosphate (TBP). Requires KbaZ subunit for full activity and stability. Is involved in the catabolism of N-acetylgalactosamine and D-galactosamine. This Escherichia coli protein is D-tagatose-1,6-bisphosphate aldolase subunit KbaY (kbaY).